The sequence spans 199 residues: uncharacterized protein (199 aa).

The signal sequence occupies residues methionine 1 to alanine 23.

This is an uncharacterized protein from Escherichia coli (strain K12).